We begin with the raw amino-acid sequence, 229 residues long: Ribonuclease HII (229 aa).

The region spanning 34-225 (GPVAGVDEAG…VKAAHDQWLQ (192 aa)) is the RNase H type-2 domain. Residues Asp40, Glu41, and Asp134 each contribute to the a divalent metal cation site.

It belongs to the RNase HII family. Mn(2+) is required as a cofactor. The cofactor is Mg(2+).

The protein localises to the cytoplasm. The enzyme catalyses Endonucleolytic cleavage to 5'-phosphomonoester.. Functionally, endonuclease that specifically degrades the RNA of RNA-DNA hybrids. The chain is Ribonuclease HII from Corynebacterium diphtheriae (strain ATCC 700971 / NCTC 13129 / Biotype gravis).